Consider the following 443-residue polypeptide: MEAYIRQKRASPGMVQASDLQINRPMSGMRSNSRELHAYDGPMQFISSPQNPDQILTNGSPGGITPVAVNTSRNHSNNMRSLSTINQEADLIEEISSHELEDEESSPVTVIEQHQQSASHSANSTQSQKPRARQHSFSDNLDEDDYTNRNVAAAAPVRPAGMASSPYKDATLEGSSNGTGNGTGGESEGDVIGNIDQFVMQPAPQGVLYKCRITRDRKGMDRGLFPIYYLHLERDYGKKIFLLGGRKRKKSKTSNYIVSCDPTDLSRNADGFCGKLRSNVFGTSFTVFDNGNKESTESPRLDLAVIIYDTNILGFKGPRNMTVILPGMTEDDQRVKISSADPKQQGILDLWKMKNMDNIVELHNKTPVWNDETQSYVLNFHGRVTQASVKNFQLVHDSDPEYIVMQFGRTSEDVFTMDYRYPLCAMQAFAIALSSFDGKIACE.

Disordered stretches follow at residues 57 to 85 (TNGSPGGITPVAVNTSRNHSNNMRSLSTI) and 98 to 189 (HELE…ESEG). A compositionally biased stretch (polar residues) spans 68–85 (AVNTSRNHSNNMRSLSTI). Residues 113–128 (QHQQSASHSANSTQSQ) show a composition bias toward low complexity. Serine 136 is modified (phosphoserine). Residues 148-160 (NRNVAAAAPVRPA) show a composition bias toward low complexity. Over residues 177–186 (NGTGNGTGGE) the composition is skewed to gly residues.

Belongs to the TUB family.

The protein resides in the cytoplasm. It is found in the nucleus. It localises to the cell projection. The protein localises to the cilium membrane. Its subcellular location is the rhabdomere. The polypeptide is Protein king tubby (Drosophila yakuba (Fruit fly)).